The sequence spans 917 residues: Alanine--tRNA ligase (917 aa).

Positions 592, 596, 694, and 698 each coordinate Zn(2+).

Belongs to the class-II aminoacyl-tRNA synthetase family. The cofactor is Zn(2+).

Its subcellular location is the cytoplasm. The catalysed reaction is tRNA(Ala) + L-alanine + ATP = L-alanyl-tRNA(Ala) + AMP + diphosphate. In terms of biological role, catalyzes the attachment of alanine to tRNA(Ala) in a two-step reaction: alanine is first activated by ATP to form Ala-AMP and then transferred to the acceptor end of tRNA(Ala). Also edits incorrectly charged Ser-tRNA(Ala) and Gly-tRNA(Ala) via its editing domain. The polypeptide is Alanine--tRNA ligase (Sorangium cellulosum (strain So ce56) (Polyangium cellulosum (strain So ce56))).